Here is a 235-residue protein sequence, read N- to C-terminus: MQYRRILLKLSGEALAGKDGYGINAEMLERFAEEVKEARDMGAEIALVIGGGNIFRGVSDAAKNMDRVQADYMGMLATVINSIAFQDALERLGVYTRLQTAIKMEQMAEPFIRRRAIRHLEKGRVVIFGAGTGNPYFTTDTAASLRAIEIEADVIVKGTRVDGVYDSDPETNPSAEFFPKISYLDVIRKNLRVMDMTAITLCRENTLPIVVMNMNEKGNLSRLIRGEHVGSLVHA.

9-12 is an ATP binding site; that stretch reads KLSG. Positions 17–22 are involved in allosteric activation by GTP; that stretch reads GKDGYG. Gly-51 is a UMP binding site. Residues Gly-52 and Arg-56 each coordinate ATP. UMP contacts are provided by residues Asp-71 and 132–139; that span reads TGNPYFTT. ATP contacts are provided by Thr-159, Tyr-165, and Asp-168.

Belongs to the UMP kinase family. As to quaternary structure, homohexamer.

Its subcellular location is the cytoplasm. The enzyme catalyses UMP + ATP = UDP + ADP. It functions in the pathway pyrimidine metabolism; CTP biosynthesis via de novo pathway; UDP from UMP (UMPK route): step 1/1. Its activity is regulated as follows. Allosterically activated by GTP. Inhibited by UTP. Catalyzes the reversible phosphorylation of UMP to UDP. This Chlorobium luteolum (strain DSM 273 / BCRC 81028 / 2530) (Pelodictyon luteolum) protein is Uridylate kinase.